The sequence spans 193 residues: MTEYALLFVSILLVNNFVLVKFLGLCPFMGVSKKLETAIGMGMATTFVMTVGSMFSWLVNEFILVPLDILYLRTMAFILVLAVVVQFSEMFVRKVSPELYRLLGIFLPLITTNCAVLGVVLLNINLSHGFLKSTIYGFGGAAGFSLVMVLFAAIRERLAVSDIPAPFRGSSIALITAGLMSLAFMGFTGLVKF.

Transmembrane regions (helical) follow at residues 5-25 (ALLF…FLGL), 39-59 (IGMG…SWLV), 62-82 (FILV…LVLA), 102-122 (LLGI…VVLL), 134-154 (TIYG…FAAI), and 171-191 (SIAL…TGLV).

It belongs to the NqrDE/RnfAE family. In terms of assembly, the complex is composed of six subunits: RnfA, RnfB, RnfC, RnfD, RnfE and RnfG.

The protein resides in the cell inner membrane. Functionally, part of a membrane-bound complex that couples electron transfer with translocation of ions across the membrane. This chain is Ion-translocating oxidoreductase complex subunit A, found in Pectobacterium carotovorum subsp. carotovorum (strain PC1).